The following is a 229-amino-acid chain: Large ribosomal subunit protein uL1 (229 aa).

It belongs to the universal ribosomal protein uL1 family. Part of the 50S ribosomal subunit.

In terms of biological role, binds directly to 23S rRNA. The L1 stalk is quite mobile in the ribosome, and is involved in E site tRNA release. Functionally, protein L1 is also a translational repressor protein, it controls the translation of the L11 operon by binding to its mRNA. In Clostridium acetobutylicum (strain ATCC 824 / DSM 792 / JCM 1419 / IAM 19013 / LMG 5710 / NBRC 13948 / NRRL B-527 / VKM B-1787 / 2291 / W), this protein is Large ribosomal subunit protein uL1.